Reading from the N-terminus, the 90-residue chain is Probable Fe(2+)-trafficking protein (90 aa).

This sequence belongs to the Fe(2+)-trafficking protein family.

Functionally, could be a mediator in iron transactions between iron acquisition and iron-requiring processes, such as synthesis and/or repair of Fe-S clusters in biosynthetic enzymes. This is Probable Fe(2+)-trafficking protein from Chromobacterium violaceum (strain ATCC 12472 / DSM 30191 / JCM 1249 / CCUG 213 / NBRC 12614 / NCIMB 9131 / NCTC 9757 / MK).